The primary structure comprises 425 residues: Probable mitochondrial import inner membrane translocase subunit tin-44 (425 aa).

Residues 38–149 (FLNNLIDNVR…EHVEKVAEKV (112 aa)) are a coiled coil.

Belongs to the Tim44 family. As to quaternary structure, probable component of the PAM complex at least composed of a mitochondrial HSP70 protein, GrpE, tin-44, tim-16 and tim-14/dnj-21. The complex interacts with the tim-23 component of the TIM23 complex.

Its subcellular location is the mitochondrion inner membrane. Its function is as follows. Essential component of the PAM complex, a complex required for the translocation of transit peptide-containing proteins from the inner membrane into the mitochondrial matrix in an ATP-dependent manner. Recruits mitochondrial HSP70 to drive protein translocation into the matrix using ATP as an energy source. The protein is Probable mitochondrial import inner membrane translocase subunit tin-44 of Caenorhabditis elegans.